A 366-amino-acid chain; its full sequence is Probable UDP-arabinopyranose mutase 2 (366 aa).

The DXD motif motif lies at 104-106 (DDD). N-linked (Glc...) arginine glycosylation is present at Arg152.

It belongs to the RGP family. Homopentamer or homohexamer. It depends on Mn(2+) as a cofactor. Mg(2+) is required as a cofactor. In terms of processing, reversibly glycosylated by UDP-glucose, UDP-xylose and UDP-galactose, but not UDP-mannose. As to expression, expressed in all tissues tested, including root, tuber, leaf, petiole, shoot, stolon and stem.

It is found in the secreted. Its subcellular location is the cell wall. The protein resides in the cell junction. It localises to the plasmodesma. The protein localises to the golgi apparatus. The enzyme catalyses UDP-beta-L-arabinofuranose = UDP-beta-L-arabinopyranose. Probable UDP-L-arabinose mutase involved in the biosynthesis of cell wall non-cellulosic polysaccharides. Was initially shown to possess an autoglycosylating activity which is dependent on the presence of UDP-glucose and manganese. The protein is Probable UDP-arabinopyranose mutase 2 of Solanum tuberosum (Potato).